The sequence spans 382 residues: Alanine racemase (382 aa).

The Proton acceptor; specific for D-alanine role is filled by Lys-37. Lys-37 carries the post-translational modification N6-(pyridoxal phosphate)lysine. Arg-135 contributes to the substrate binding site. Catalysis depends on Tyr-267, which acts as the Proton acceptor; specific for L-alanine. A substrate-binding site is contributed by Met-315.

Belongs to the alanine racemase family. It depends on pyridoxal 5'-phosphate as a cofactor.

It catalyses the reaction L-alanine = D-alanine. Its pathway is amino-acid biosynthesis; D-alanine biosynthesis; D-alanine from L-alanine: step 1/1. In terms of biological role, catalyzes the interconversion of L-alanine and D-alanine. May also act on other amino acids. The sequence is that of Alanine racemase (alr) from Geobacter sulfurreducens (strain ATCC 51573 / DSM 12127 / PCA).